We begin with the raw amino-acid sequence, 380 residues long: TPR repeat-containing thioredoxin TDX (380 aa).

Residue valine 2 is modified to N-acetylvaline. A compositionally biased stretch (basic and acidic residues) spans 49–59 (TERDYEDKAET). The segment at 49 to 115 (TERDYEDKAE…DENRDDAQSE (67 aa)) is disordered. Residues 69–91 (DDDDDIMESDVELDNSDVVEPDN) show a composition bias toward acidic residues. A compositionally biased stretch (basic and acidic residues) spans 106 to 115 (DENRDDAQSE). 3 TPR repeats span residues 112–145 (AQSE…NPTS), 147–179 (ILYA…NSDS), and 181–213 (KGYK…DYDE). A compositionally biased stretch (basic and acidic residues) spans 240–263 (RKEKELQRAERERRKQQEAQEREA). Residues 240–265 (RKEKELQRAERERRKQQEAQEREAQA) are disordered. The Thioredoxin domain maps to 252–378 (RRKQQEAQER…LEQKIAQHSS (127 aa)). Active-site nucleophile residues include cysteine 304 and cysteine 307. Residues cysteine 304 and cysteine 307 are joined by a disulfide bond.

Belongs to the thioredoxin family. In terms of assembly, oligomerization under high temperature.

In terms of biological role, thiol-disulfide oxidoreductase that possesses insulin disulfide bonds reducing activity, disulfide reductase, foldase chaperone and holdase chaperone activities. Heat shock causes oligomerization and formation of high molecular weiht (HMW) complexes with concomitant functional switching from a disulfide reductase and foldase chaperone to a holdase chaperone. May interact with HSP70 proteins through the TPR repeats. The sequence is that of TPR repeat-containing thioredoxin TDX (TDX) from Arabidopsis thaliana (Mouse-ear cress).